The following is a 270-amino-acid chain: 5'-nucleotidase SurE (270 aa).

Residues D8, D9, S40, and N98 each contribute to the a divalent metal cation site.

The protein belongs to the SurE nucleotidase family. A divalent metal cation serves as cofactor.

Its subcellular location is the cytoplasm. It catalyses the reaction a ribonucleoside 5'-phosphate + H2O = a ribonucleoside + phosphate. Functionally, nucleotidase that shows phosphatase activity on nucleoside 5'-monophosphates. The protein is 5'-nucleotidase SurE of Cyanothece sp. (strain PCC 7425 / ATCC 29141).